The chain runs to 173 residues: Ribosome maturation factor RimM (173 aa).

In terms of domain architecture, PRC barrel spans 95–169 (EGSYYFKDIL…RIEVTLLEGL (75 aa)).

The protein belongs to the RimM family. Binds ribosomal protein uS19.

The protein resides in the cytoplasm. Functionally, an accessory protein needed during the final step in the assembly of 30S ribosomal subunit, possibly for assembly of the head region. Essential for efficient processing of 16S rRNA. May be needed both before and after RbfA during the maturation of 16S rRNA. It has affinity for free ribosomal 30S subunits but not for 70S ribosomes. The sequence is that of Ribosome maturation factor RimM from Lactobacillus gasseri (strain ATCC 33323 / DSM 20243 / BCRC 14619 / CIP 102991 / JCM 1131 / KCTC 3163 / NCIMB 11718 / NCTC 13722 / AM63).